The following is a 176-amino-acid chain: NAD(P)H-quinone oxidoreductase subunit 6, chloroplastic (176 aa).

The next 5 membrane-spanning stretches (helical) occupy residues 10-30 (FLLV…VLLT), 32-52 (PIYS…FYIL), 61-81 (AQLL…VMFM), 92-112 (LWTL…LSLI), and 152-172 (FFLP…GAIA).

This sequence belongs to the complex I subunit 6 family. As to quaternary structure, NDH is composed of at least 16 different subunits, 5 of which are encoded in the nucleus.

It localises to the plastid. The protein resides in the chloroplast thylakoid membrane. It catalyses the reaction a plastoquinone + NADH + (n+1) H(+)(in) = a plastoquinol + NAD(+) + n H(+)(out). The catalysed reaction is a plastoquinone + NADPH + (n+1) H(+)(in) = a plastoquinol + NADP(+) + n H(+)(out). Functionally, NDH shuttles electrons from NAD(P)H:plastoquinone, via FMN and iron-sulfur (Fe-S) centers, to quinones in the photosynthetic chain and possibly in a chloroplast respiratory chain. The immediate electron acceptor for the enzyme in this species is believed to be plastoquinone. Couples the redox reaction to proton translocation, and thus conserves the redox energy in a proton gradient. The polypeptide is NAD(P)H-quinone oxidoreductase subunit 6, chloroplastic (ndhG) (Pelargonium hortorum (Common geranium)).